A 195-amino-acid chain; its full sequence is dITP/XTP pyrophosphatase (195 aa).

Residue 8-13 (TNNQGK) coordinates substrate. Mg(2+)-binding residues include Glu-39 and Asp-68. Asp-68 acts as the Proton acceptor in catalysis. Residues Ser-69, 149–152 (FGYD), Lys-172, and 177–178 (HR) contribute to the substrate site.

It belongs to the HAM1 NTPase family. As to quaternary structure, homodimer. The cofactor is Mg(2+).

It carries out the reaction XTP + H2O = XMP + diphosphate + H(+). The enzyme catalyses dITP + H2O = dIMP + diphosphate + H(+). The catalysed reaction is ITP + H2O = IMP + diphosphate + H(+). Pyrophosphatase that catalyzes the hydrolysis of nucleoside triphosphates to their monophosphate derivatives, with a high preference for the non-canonical purine nucleotides XTP (xanthosine triphosphate), dITP (deoxyinosine triphosphate) and ITP. Seems to function as a house-cleaning enzyme that removes non-canonical purine nucleotides from the nucleotide pool, thus preventing their incorporation into DNA/RNA and avoiding chromosomal lesions. This is dITP/XTP pyrophosphatase from Staphylococcus epidermidis (strain ATCC 35984 / DSM 28319 / BCRC 17069 / CCUG 31568 / BM 3577 / RP62A).